The chain runs to 424 residues: MVSPLAVKGGEALRTRPWPAWPQPAPGVPAAVAEVLGSGRWSISGPYRGTDSHERRFARAFADYHGVPYCVPAASGTAGLMLALEACGVGAGDEVIVPGLSWVASGSTVLGVNAVPVFCDVDPDTLCVSPEAVEALITERTRAVVVVHLYSAVADMDGLTRVAERHGLPLVEDCAQAHGASYRGVKVGALATAGTFSMQHSKVLTSGEGGAVITRDADLARRVEHLRADGRCLSDGPPAPGAMELVETGELMGSNRCLSEFQAAILTEQLTLLDEQNRTRRANAARLDGLLGELGLRPQATSEGTTSRTYYTYAARLPEGALEDVPLTDVTGALTAELGFPVQPCYAPIPANRLYAPQTRRRYTLGPDHEARIDPKRFALPVCEDTARRTVTLHHAALLGDAEDMADIAAAFAKVLRHGADLAT.

Residue Lys202 is modified to N6-(pyridoxal phosphate)lysine.

It belongs to the DegT/DnrJ/EryC1 family. L-glutamine:2-deoxy-scyllo-inosose/scyllo-inosose aminotransferase subfamily. Pyridoxal 5'-phosphate serves as cofactor.

The enzyme catalyses 2-deoxy-L-scyllo-inosose + L-glutamine = 2-deoxy-scyllo-inosamine + 2-oxoglutaramate. The catalysed reaction is 3-amino-2,3-dideoxy-scyllo-inosose + L-glutamine = 2-deoxystreptamine + 2-oxoglutaramate. The protein operates within metabolic intermediate biosynthesis; 2-deoxystreptamine biosynthesis; 2-deoxystreptamine from D-glucose 6-phosphate: step 2/4. Its pathway is metabolic intermediate biosynthesis; 2-deoxystreptamine biosynthesis; 2-deoxystreptamine from D-glucose 6-phosphate: step 4/4. It functions in the pathway antibiotic biosynthesis; neomycin biosynthesis. Its function is as follows. Catalyzes the PLP-dependent transamination of 2-deoxy-scyllo-inosose (2-DOI) to form 2-deoxy-scyllo-inosamine (2-DOIA) using L-glutamine as the amino donor. Also catalyzes the transamination of 3-amino-2,3-dideoxy-scyllo-inosose (keto-2-DOIA) into 2-deoxystreptamine (2-DOS). The polypeptide is L-glutamine:2-deoxy-scyllo-inosose aminotransferase (neoB) (Streptomyces fradiae (Streptomyces roseoflavus)).